A 477-amino-acid chain; its full sequence is Diacylglycerol O-acyltransferase 1-2 (477 aa).

The interval 1-48 is disordered; the sequence is MAPPPSLAPDRGGGEPDDALRLRARAAAAAGDAPAPQQQQEQRHQEQQ. Basic and acidic residues predominate over residues 12–21; the sequence is GGGEPDDALR. Residues 25-40 are compositionally biased toward low complexity; sequence RAAAAAGDAPAPQQQQ. The next 7 membrane-spanning stretches (helical) occupy residues 79-99, 123-143, 155-175, 182-202, 230-250, 263-283, and 319-339; these read HAGLLNLCIVVLVAVNSRLII, WPLLMCCLTLPTFPLAALMVE, VVILLHIVITTSVLVYPVVVI, VLSGFVLMFLASIIWLKLVSF, NIKWPTFKRLSYFMLAPTLCY, GWVVRQLIKCLVFTGLMGFII, and VWLCMFYCFFHLWLNILAELL. An FYXDWWN motif motif is present at residues 346–352; the sequence is FYKDWWN. The next 3 helical transmembrane spans lie at 387–407, 409–429, and 442–462; these read GVAILISFLVSAAFHELCVAV, CHIFKFWAFIGIMFQIPLVFL, and VGNMIFWFFFSILGQPMCVLL. Histidine 401 is a catalytic residue.

This sequence belongs to the membrane-bound acyltransferase family. Sterol o-acyltransferase subfamily.

The protein resides in the endoplasmic reticulum membrane. The catalysed reaction is an acyl-CoA + a 1,2-diacyl-sn-glycerol = a triacyl-sn-glycerol + CoA. It functions in the pathway glycerolipid metabolism; triacylglycerol biosynthesis. Its function is as follows. Involved in triacylglycerol (TAG) synthesis. Catalyzes the acylation of the sn-3 hydroxy group of sn-1,2-diacylglycerol using acyl-CoA. In Oryza sativa subsp. japonica (Rice), this protein is Diacylglycerol O-acyltransferase 1-2.